The sequence spans 376 residues: Carbamoyl phosphate synthase small chain (376 aa).

The tract at residues 1–184 (MKAILALADG…SEGYQQQTGE (184 aa)) is CPSase. L-glutamine contacts are provided by serine 45, glycine 236, and glycine 238. Positions 188 to 374 (KVVAYDFGIK…ADLMEKNRQS (187 aa)) constitute a Glutamine amidotransferase type-1 domain. Cysteine 263 (nucleophile) is an active-site residue. 5 residues coordinate L-glutamine: leucine 264, glutamine 267, asparagine 305, glycine 307, and phenylalanine 308. Residues histidine 347 and glutamate 349 contribute to the active site.

The protein belongs to the CarA family. Composed of two chains; the small (or glutamine) chain promotes the hydrolysis of glutamine to ammonia, which is used by the large (or ammonia) chain to synthesize carbamoyl phosphate. Tetramer of heterodimers (alpha,beta)4.

It carries out the reaction hydrogencarbonate + L-glutamine + 2 ATP + H2O = carbamoyl phosphate + L-glutamate + 2 ADP + phosphate + 2 H(+). The catalysed reaction is L-glutamine + H2O = L-glutamate + NH4(+). It functions in the pathway amino-acid biosynthesis; L-arginine biosynthesis; carbamoyl phosphate from bicarbonate: step 1/1. Its pathway is pyrimidine metabolism; UMP biosynthesis via de novo pathway; (S)-dihydroorotate from bicarbonate: step 1/3. Its function is as follows. Small subunit of the glutamine-dependent carbamoyl phosphate synthetase (CPSase). CPSase catalyzes the formation of carbamoyl phosphate from the ammonia moiety of glutamine, carbonate, and phosphate donated by ATP, constituting the first step of 2 biosynthetic pathways, one leading to arginine and/or urea and the other to pyrimidine nucleotides. The small subunit (glutamine amidotransferase) binds and cleaves glutamine to supply the large subunit with the substrate ammonia. This Syntrophotalea carbinolica (strain DSM 2380 / NBRC 103641 / GraBd1) (Pelobacter carbinolicus) protein is Carbamoyl phosphate synthase small chain.